The sequence spans 132 residues: Probable histone H2A.2 (132 aa).

This sequence belongs to the histone H2A family. In terms of assembly, the nucleosome is a histone octamer containing two molecules each of H2A, H2B, H3 and H4 assembled in one H3-H4 heterotetramer and two H2A-H2B heterodimers. The octamer wraps approximately 147 bp of DNA. In terms of processing, not ubiquitinated. As to expression, expressed mainly in non-dividing tissues of the plant. Also found in meristems and dividing cells.

The protein resides in the nucleus. The protein localises to the chromosome. Its function is as follows. Core component of nucleosome. Nucleosomes wrap and compact DNA into chromatin, limiting DNA accessibility to the cellular machineries which require DNA as a template. Histones thereby play a central role in transcription regulation, DNA repair, DNA replication and chromosomal stability. DNA accessibility is regulated via a complex set of post-translational modifications of histones, also called histone code, and nucleosome remodeling. The protein is Probable histone H2A.2 of Arabidopsis thaliana (Mouse-ear cress).